Consider the following 332-residue polypeptide: Monoterpene synthase 25 (332 aa).

The Mg(2+) site is built by Asp115, Glu180, Asn240, Ser244, and Glu248. A DDXXXXD motif motif is present at residues Asp115–Asp121. Residues Asn240–Glu248 carry the NSE/DTE motif motif.

This sequence belongs to the trichodiene synthase family. It depends on Mg(2+) as a cofactor.

Its function is as follows. Terpene cyclase that catalyzes the cyclization of geranyl diphosphate (GPP) to myrcene and linalool. This is Monoterpene synthase 25 from Postia placenta (strain ATCC 44394 / Madison 698-R) (Brown rot fungus).